We begin with the raw amino-acid sequence, 195 residues long: Large ribosomal subunit protein uL18 (195 aa).

This sequence belongs to the universal ribosomal protein uL18 family. As to quaternary structure, part of the 50S ribosomal subunit. Contacts the 5S and 23S rRNAs.

Functionally, this is one of the proteins that bind and probably mediate the attachment of the 5S RNA into the large ribosomal subunit, where it forms part of the central protuberance. In Nanoarchaeum equitans (strain Kin4-M), this protein is Large ribosomal subunit protein uL18.